Reading from the N-terminus, the 293-residue chain is Small ribosomal subunit protein uS5 (293 aa).

Residues 1–55 (MADDAGAAGGPGGPGGPGLGGRGGFRGGFGSGLRGRGRGRGRGRGRGRGARGGKA) are disordered. The residue at position 2 (Ala2) is an N-acetylalanine. Positions 7–34 (AAGGPGGPGGPGLGGRGGFRGGFGSGLR) are enriched in gly residues. 14 repeat units span residues 9–11 (GGP), 12–14 (GGP), 15–17 (GGP), 22–25 (RGGF), 26–29 (RGGF), 34–35 (RG), 36–37 (RG), 38–39 (RG), 40–41 (RG), 42–43 (RG), 44–45 (RG), 46–47 (RG), 48–49 (RG), and 51–52 (RG). Positions 9 to 17 (GGPGGPGGP) are 3 X 3 AA tandem repeats of G-G-P. Residues 22–29 (RGGFRGGF) are 2 X 4 AA tandem repeats of R-G-G-F. The 9 X 2 AA tandem repeats of R-G stretch occupies residues 34-52 (RGRGRGRGRGRGRGRGARG). Over residues 35–51 (GRGRGRGRGRGRGRGAR) the composition is skewed to basic residues. Glycyl lysine isopeptide (Lys-Gly) (interchain with G-Cter in ubiquitin) cross-links involve residues Lys54 and Lys58. Positions 102–165 (LKDEVLKIMP…ILAKLSIVPV (64 aa)) constitute an S5 DRBM domain. Thr252 carries the post-translational modification Phosphothreonine. Position 263 is an N6-acetyllysine (Lys263). Ser264 carries the post-translational modification Phosphoserine. Thr270 carries the post-translational modification Phosphothreonine. Lys275 carries the N6-acetyllysine; alternate modification. Residue Lys275 forms a Glycyl lysine isopeptide (Lys-Gly) (interchain with G-Cter in SUMO1); alternate linkage. Residue Lys275 forms a Glycyl lysine isopeptide (Lys-Gly) (interchain with G-Cter in SUMO2); alternate linkage. Lys275 is covalently cross-linked (Glycyl lysine isopeptide (Lys-Gly) (interchain with G-Cter in ubiquitin); alternate). A Phosphoserine modification is found at Ser281.

Belongs to the universal ribosomal protein uS5 family. In terms of assembly, component of the small ribosomal subunit. Interacts with zinc finger protein ZNF277 (via zinc-finger domains); the interaction is direct; the interaction is extra-ribosomal. Interaction with ZNF277 competes with the binding of RPS2 to protein arginine methyltransferase PRMT3. In terms of processing, citrullinated by PADI4 in the Arg/Gly-rich region. Post-translationally, asymmetric arginine dimethylation by PRMT3 occurs at multiple sites in the Arg/Gly-rich region. Monoubiquitinated at Lys-54 and Lys-58 by RNF10 when a ribosome has stalled during translation, leading to its degradation by the proteasome. Deubiquitinated at Lys-54 and Lys-58 by USP10, preventing degradation by the proteasome and promoting 40S ribosome subunit recycling following ribosome dissociation.

The protein resides in the cytoplasm. The protein localises to the nucleus. It is found in the nucleolus. Component of the ribosome, a large ribonucleoprotein complex responsible for the synthesis of proteins in the cell. The small ribosomal subunit (SSU) binds messenger RNAs (mRNAs) and translates the encoded message by selecting cognate aminoacyl-transfer RNA (tRNA) molecules. The large subunit (LSU) contains the ribosomal catalytic site termed the peptidyl transferase center (PTC), which catalyzes the formation of peptide bonds, thereby polymerizing the amino acids delivered by tRNAs into a polypeptide chain. The nascent polypeptides leave the ribosome through a tunnel in the LSU and interact with protein factors that function in enzymatic processing, targeting, and the membrane insertion of nascent chains at the exit of the ribosomal tunnel. Plays a role in the assembly and function of the 40S ribosomal subunit. Mutations in this protein affects the control of translational fidelity. Involved in nucleolar processing of pre-18S ribosomal RNA and ribosome assembly. This Rattus norvegicus (Rat) protein is Small ribosomal subunit protein uS5 (Rps2).